Reading from the N-terminus, the 202-residue chain is Nucleoside triphosphate pyrophosphatase (202 aa).

The active-site Proton acceptor is D79.

Belongs to the Maf family. A divalent metal cation serves as cofactor.

It is found in the cytoplasm. It catalyses the reaction a ribonucleoside 5'-triphosphate + H2O = a ribonucleoside 5'-phosphate + diphosphate + H(+). It carries out the reaction a 2'-deoxyribonucleoside 5'-triphosphate + H2O = a 2'-deoxyribonucleoside 5'-phosphate + diphosphate + H(+). In terms of biological role, nucleoside triphosphate pyrophosphatase. May have a dual role in cell division arrest and in preventing the incorporation of modified nucleotides into cellular nucleic acids. This chain is Nucleoside triphosphate pyrophosphatase, found in Rhodopseudomonas palustris (strain BisB18).